Reading from the N-terminus, the 464-residue chain is NADH-quinone oxidoreductase subunit N 2 (464 aa).

Helical transmembrane passes span 12–32 (VGIIFLIILELFLPSFDLIGF), 33–53 (LGFLISFISGVLAIKYSLAGY), 62–82 (INAFSLLLKGVMYILTSFVIF), 93–113 (TFVENVYTFLLISLGLSIMVS), 117–137 (LAVILAGLELASISMYISVGM), 152–172 (LVLGSMTTAFFGIGSAFYIGA), 189–209 (FALASLFLFVAFALKVSAAPF), 227–247 (FISTVPKIGFYAVLFLLASYI), 254–274 (FSYIVGIVGVISMFWGNLVAY), 282–304 (MLAYSSIGHAGYFLIGFSRYNPL), 310–330 (IFYVIVYAFATAGAFLVLSIL), 351–371 (PFLATALALFLFALIGIPPFA), 400–420 (IIAAGYYLKLIVYMFFKEPAT), and 434–454 (IGISAFLIIVFFFGIFPNILF).

It belongs to the complex I subunit 2 family. In terms of assembly, NDH-1 is composed of 14 different subunits. Subunits NuoA, H, J, K, L, M, N constitute the membrane sector of the complex.

It localises to the cell inner membrane. The enzyme catalyses a quinone + NADH + 5 H(+)(in) = a quinol + NAD(+) + 4 H(+)(out). Its function is as follows. NDH-1 shuttles electrons from NADH, via FMN and iron-sulfur (Fe-S) centers, to quinones in the respiratory chain. The immediate electron acceptor for the enzyme in this species is believed to be ubiquinone. Couples the redox reaction to proton translocation (for every two electrons transferred, four hydrogen ions are translocated across the cytoplasmic membrane), and thus conserves the redox energy in a proton gradient. The chain is NADH-quinone oxidoreductase subunit N 2 from Hydrogenobaculum sp. (strain Y04AAS1).